Consider the following 199-residue polypeptide: Proteasome subunit beta 2 (199 aa).

Positions 1–6 (MEKKTG) are cleaved as a propeptide — removed in mature form; by autocatalysis. The active-site Nucleophile is threonine 7.

Belongs to the peptidase T1B family. As to quaternary structure, the 20S proteasome core is composed of 14 alpha and 14 beta subunits that assemble into four stacked heptameric rings, resulting in a barrel-shaped structure. The two inner rings, each composed of seven catalytic beta subunits, are sandwiched by two outer rings, each composed of seven alpha subunits. The catalytic chamber with the active sites is on the inside of the barrel. Has a gated structure, the ends of the cylinder being occluded by the N-termini of the alpha-subunits. Is capped at one or both ends by the proteasome regulatory ATPase, PAN.

Its subcellular location is the cytoplasm. The enzyme catalyses Cleavage of peptide bonds with very broad specificity.. The formation of the proteasomal ATPase PAN-20S proteasome complex, via the docking of the C-termini of PAN into the intersubunit pockets in the alpha-rings, triggers opening of the gate for substrate entry. Interconversion between the open-gate and close-gate conformations leads to a dynamic regulation of the 20S proteasome proteolysis activity. Component of the proteasome core, a large protease complex with broad specificity involved in protein degradation. In Thermococcus kodakarensis (strain ATCC BAA-918 / JCM 12380 / KOD1) (Pyrococcus kodakaraensis (strain KOD1)), this protein is Proteasome subunit beta 2.